We begin with the raw amino-acid sequence, 129 residues long: Small ribosomal subunit protein uS11 (129 aa).

Part of the 30S ribosomal subunit. Interacts with proteins S7 and S18. Binds to IF-3. In terms of processing, may be methylated on an undetermined residue.

In terms of biological role, located on the platform of the 30S subunit, it bridges several disparate RNA helices of the 16S rRNA. Forms part of the Shine-Dalgarno cleft in the 70S ribosome. The sequence is that of Small ribosomal subunit protein uS11 from Rhodopseudomonas palustris (strain ATCC BAA-98 / CGA009).